The following is a 176-amino-acid chain: ATP-dependent protease subunit HslV (176 aa).

Thr-5 is an active-site residue. Na(+) contacts are provided by Ser-161, Cys-164, and Thr-167.

Belongs to the peptidase T1B family. HslV subfamily. As to quaternary structure, a double ring-shaped homohexamer of HslV is capped on each side by a ring-shaped HslU homohexamer. The assembly of the HslU/HslV complex is dependent on binding of ATP.

Its subcellular location is the cytoplasm. It carries out the reaction ATP-dependent cleavage of peptide bonds with broad specificity.. Allosterically activated by HslU binding. In terms of biological role, protease subunit of a proteasome-like degradation complex believed to be a general protein degrading machinery. The sequence is that of ATP-dependent protease subunit HslV from Thermoanaerobacter sp. (strain X514).